We begin with the raw amino-acid sequence, 217 residues long: MLNISIAIDGPAGAGKSTIAKIIGNKLNIMYINTGSMYRAVTLMALKNNIEPYDIESLKALINSMNISFNGNNIIVNGKDLEEDIRMPIINNNVSKYAAVEEVRELLVSMQQNISKKYNVVMDGRDIGTVVLKDAPYKFFITASAEVRAKRRLKELEEKGINISFQDVLKEIKERDYIDSNRKVNPLKQSKDAILIDTSNFTIEEVVDKICNIIKRD.

10–18 (GPAGAGKST) is an ATP binding site.

The protein belongs to the cytidylate kinase family. Type 1 subfamily.

It localises to the cytoplasm. It catalyses the reaction CMP + ATP = CDP + ADP. It carries out the reaction dCMP + ATP = dCDP + ADP. This is Cytidylate kinase from Clostridium botulinum (strain Langeland / NCTC 10281 / Type F).